A 631-amino-acid chain; its full sequence is Glutamyl-tRNA(Gln) amidotransferase subunit E (631 aa).

This sequence belongs to the GatB/GatE family. GatE subfamily. In terms of assembly, heterodimer of GatD and GatE.

The enzyme catalyses L-glutamyl-tRNA(Gln) + L-glutamine + ATP + H2O = L-glutaminyl-tRNA(Gln) + L-glutamate + ADP + phosphate + H(+). Allows the formation of correctly charged Gln-tRNA(Gln) through the transamidation of misacylated Glu-tRNA(Gln) in organisms which lack glutaminyl-tRNA synthetase. The reaction takes place in the presence of glutamine and ATP through an activated gamma-phospho-Glu-tRNA(Gln). The GatDE system is specific for glutamate and does not act on aspartate. The protein is Glutamyl-tRNA(Gln) amidotransferase subunit E of Methanococcus maripaludis (strain C6 / ATCC BAA-1332).